The sequence spans 86 residues: Co-chaperonin GroES (86 aa).

This sequence belongs to the GroES chaperonin family. In terms of assembly, heptamer of 7 subunits arranged in a ring. Interacts with the chaperonin GroEL.

The protein resides in the cytoplasm. Functionally, together with the chaperonin GroEL, plays an essential role in assisting protein folding. The GroEL-GroES system forms a nano-cage that allows encapsulation of the non-native substrate proteins and provides a physical environment optimized to promote and accelerate protein folding. GroES binds to the apical surface of the GroEL ring, thereby capping the opening of the GroEL channel. In Campylobacter curvus (strain 525.92), this protein is Co-chaperonin GroES.